The sequence spans 240 residues: Seed lectin (240 aa).

Asn111 is a glycosylation site (N-linked (GlcNAc...) asparagine). Mn(2+)-binding residues include Glu123 and Asp125. 3 residues coordinate Ca(2+): Asp125, Asn129, and Asp132. Mn(2+) is bound by residues Asp132 and His137. Residue Asn183 is glycosylated (N-linked (GlcNAc...) asparagine).

Belongs to the leguminous lectin family. As to quaternary structure, homotetramer. Partially N-glycosylated at Asn-111 and Asn-183 with the heptasaccharide [(beta-xylosyl-1,2)(alpha-mannosyl-1,6)(alpha-mannosyl-1,3)]beta-manosyl-1,4-GlcNAC-beta-1,4-GlcNAc-beta-1,4 [alpha-fucosyl-1,3]GlcNAc. A small proportion of alpha chains are proteolytically cleaved at 114-115 into gamma and beta chains. This is probably dependent on the deglycosylation of Asn-111. As to expression, seed.

In terms of biological role, lectin that binds galactose. The protein is Seed lectin of Vatairea macrocarpa.